The primary structure comprises 316 residues: tRNA pseudouridine synthase B (316 aa).

Residue D47 is the Nucleophile of the active site.

Belongs to the pseudouridine synthase TruB family. Type 1 subfamily.

It catalyses the reaction uridine(55) in tRNA = pseudouridine(55) in tRNA. Its function is as follows. Responsible for synthesis of pseudouridine from uracil-55 in the psi GC loop of transfer RNAs. The chain is tRNA pseudouridine synthase B from Aliivibrio fischeri (strain ATCC 700601 / ES114) (Vibrio fischeri).